The chain runs to 452 residues: Phosphoglucosamine mutase (452 aa).

Residue serine 101 is the Phosphoserine intermediate of the active site. Serine 101, aspartate 241, aspartate 243, and aspartate 245 together coordinate Mg(2+). Serine 101 carries the phosphoserine modification.

The protein belongs to the phosphohexose mutase family. Requires Mg(2+) as cofactor. Activated by phosphorylation.

It carries out the reaction alpha-D-glucosamine 1-phosphate = D-glucosamine 6-phosphate. Catalyzes the conversion of glucosamine-6-phosphate to glucosamine-1-phosphate. The protein is Phosphoglucosamine mutase of Lactococcus lactis subsp. cremoris (strain SK11).